A 552-amino-acid polypeptide reads, in one-letter code: Rqc2 homolog RqcH (552 aa).

2 coiled-coil regions span residues 271-317 (RDRV…QKGE) and 357-398 (NAQR…MLGQ).

Belongs to the NEMF family. In terms of assembly, associates with stalled 50S ribosomal subunits, binds to RqcH. Recombinant protein interacts with the N-terminal 30 kDa of human fibronectin (FN1).

In terms of biological role, key component of the ribosome quality control system (RQC), a ribosome-associated complex that mediates the extraction of incompletely synthesized nascent chains from stalled ribosomes and their subsequent degradation. RqcH recruits Ala-charged tRNA, and with RqcP directs the elongation of stalled nascent chains on 50S ribosomal subunits, leading to non-templated C-terminal alanine extensions (Ala tail). The Ala tail promotes nascent chain degradation. May add between 1 and at least 8 Ala residues. Binds to stalled 50S ribosomal subunits. In Streptococcus suis (strain 05ZYH33), this protein is Rqc2 homolog RqcH.